Here is a 1361-residue protein sequence, read N- to C-terminus: Protein transport protein SEC16B homolog (1361 aa).

S46 is modified (phosphoserine). Disordered stretches follow at residues N82–A109, V487–P513, P984–T1013, S1025–P1062, E1163–R1204, N1216–A1235, and S1306–L1361. The span at P491–S503 shows a compositional bias: low complexity. The span at T996–T1013 shows a compositional bias: polar residues. Composition is skewed to polar residues over residues I1169 to S1200, N1222 to T1234, and N1308 to G1325. Positions N1326–E1354 are enriched in low complexity.

It belongs to the SEC16 family.

It localises to the golgi apparatus. It is found in the endoplasmic reticulum. Functionally, required for protein transport from the endoplasmic reticulum to the Golgi apparatus. The protein is Protein transport protein SEC16B homolog of Arabidopsis thaliana (Mouse-ear cress).